A 292-amino-acid polypeptide reads, in one-letter code: Probable septum site-determining protein MinC (292 aa).

The disordered stretch occupies residues 109–188 (QVIDTAPPND…PQSSSALVIT (80 aa)). Acidic residues predominate over residues 140-150 (QDDEADGEQAD). Polar residues predominate over residues 171–185 (ANRPTATPPQSSSAL).

It belongs to the MinC family. In terms of assembly, interacts with MinD and FtsZ.

Functionally, cell division inhibitor that blocks the formation of polar Z ring septums. Rapidly oscillates between the poles of the cell to destabilize FtsZ filaments that have formed before they mature into polar Z rings. Prevents FtsZ polymerization. The protein is Probable septum site-determining protein MinC of Bordetella pertussis (strain Tohama I / ATCC BAA-589 / NCTC 13251).